Here is a 376-residue protein sequence, read N- to C-terminus: Erythronate-4-phosphate dehydrogenase (376 aa).

The substrate site is built by S45 and T67. An NAD(+)-binding site is contributed by D147. Residue R209 is part of the active site. An NAD(+)-binding site is contributed by D233. The active site involves E238. H255 (proton donor) is an active-site residue. An NAD(+)-binding site is contributed by G258. Residue Y259 coordinates substrate.

The protein belongs to the D-isomer specific 2-hydroxyacid dehydrogenase family. PdxB subfamily. As to quaternary structure, homodimer.

It is found in the cytoplasm. It catalyses the reaction 4-phospho-D-erythronate + NAD(+) = (R)-3-hydroxy-2-oxo-4-phosphooxybutanoate + NADH + H(+). The protein operates within cofactor biosynthesis; pyridoxine 5'-phosphate biosynthesis; pyridoxine 5'-phosphate from D-erythrose 4-phosphate: step 2/5. Catalyzes the oxidation of erythronate-4-phosphate to 3-hydroxy-2-oxo-4-phosphonooxybutanoate. This is Erythronate-4-phosphate dehydrogenase from Shewanella baltica (strain OS155 / ATCC BAA-1091).